We begin with the raw amino-acid sequence, 326 residues long: Lipoyl synthase (326 aa).

7 residues coordinate [4Fe-4S] cluster: Cys74, Cys79, Cys85, Cys100, Cys104, Cys107, and Ser314. Residues 85–303 (CFGKGTATFM…EEEAYKMGFT (219 aa)) form the Radical SAM core domain.

This sequence belongs to the radical SAM superfamily. Lipoyl synthase family. It depends on [4Fe-4S] cluster as a cofactor.

The protein resides in the cytoplasm. It carries out the reaction [[Fe-S] cluster scaffold protein carrying a second [4Fe-4S](2+) cluster] + N(6)-octanoyl-L-lysyl-[protein] + 2 oxidized [2Fe-2S]-[ferredoxin] + 2 S-adenosyl-L-methionine + 4 H(+) = [[Fe-S] cluster scaffold protein] + N(6)-[(R)-dihydrolipoyl]-L-lysyl-[protein] + 4 Fe(3+) + 2 hydrogen sulfide + 2 5'-deoxyadenosine + 2 L-methionine + 2 reduced [2Fe-2S]-[ferredoxin]. It participates in protein modification; protein lipoylation via endogenous pathway; protein N(6)-(lipoyl)lysine from octanoyl-[acyl-carrier-protein]: step 2/2. In terms of biological role, catalyzes the radical-mediated insertion of two sulfur atoms into the C-6 and C-8 positions of the octanoyl moiety bound to the lipoyl domains of lipoate-dependent enzymes, thereby converting the octanoylated domains into lipoylated derivatives. The chain is Lipoyl synthase from Delftia acidovorans (strain DSM 14801 / SPH-1).